Here is a 69-residue protein sequence, read N- to C-terminus: DNA gyrase inhibitor YacG (69 aa).

Residues Cys7, Cys10, Cys26, and Cys30 each coordinate Zn(2+).

It belongs to the DNA gyrase inhibitor YacG family. In terms of assembly, interacts with GyrB. Requires Zn(2+) as cofactor.

Functionally, inhibits all the catalytic activities of DNA gyrase by preventing its interaction with DNA. Acts by binding directly to the C-terminal domain of GyrB, which probably disrupts DNA binding by the gyrase. The protein is DNA gyrase inhibitor YacG of Shewanella sp. (strain ANA-3).